The primary structure comprises 214 residues: Adenylate kinase (214 aa).

Gly-10–Thr-15 contacts ATP. Residues Ser-30 to Val-59 are NMP. Residues Thr-31, Arg-36, Lys-57–Val-59, Gly-85–Arg-88, and Gln-92 contribute to the AMP site. The segment at Gly-122–Asp-159 is LID. ATP is bound by residues Arg-123 and Val-132–Tyr-133. 2 residues coordinate AMP: Arg-156 and Arg-167. The residue at position 192 (Lys-192) is an N6-acetyllysine. Residue Lys-200 participates in ATP binding.

Belongs to the adenylate kinase family. In terms of assembly, monomer.

The protein localises to the cytoplasm. The enzyme catalyses AMP + ATP = 2 ADP. Its pathway is purine metabolism; AMP biosynthesis via salvage pathway; AMP from ADP: step 1/1. Its function is as follows. Catalyzes the reversible transfer of the terminal phosphate group between ATP and AMP. Plays an important role in cellular energy homeostasis and in adenine nucleotide metabolism. This Escherichia coli O45:K1 (strain S88 / ExPEC) protein is Adenylate kinase.